The primary structure comprises 327 residues: Gonadotropin-releasing hormone receptor (327 aa).

Topologically, residues Met-1–Arg-38 are extracellular. 2 N-linked (GlcNAc...) asparagine glycosylation sites follow: Asn-4 and Asn-18. A helical membrane pass occupies residues Val-39–Leu-58. At Lys-59–Lys-77 the chain is on the cytoplasmic side. The chain crosses the membrane as a helical span at residues Val-78 to Leu-97. The Extracellular segment spans residues Asp-98 to Lys-115. A glycan (N-linked (GlcNAc...) asparagine) is linked at Asn-102. Cys-114 and Cys-195 are joined by a disulfide. The chain crosses the membrane as a helical span at residues Val-116–Leu-137. The Cytoplasmic portion of the chain corresponds to Asp-138–Trp-164. The chain crosses the membrane as a helical span at residues Ile-165–Ala-184. Over Asp-185–Asn-211 the chain is Extracellular. Residues Phe-212 to Ala-231 form a helical membrane-spanning segment. Residues Lys-232–Thr-280 are Cytoplasmic-facing. The chain crosses the membrane as a helical span at residues Pro-281–Val-299. The Extracellular segment spans residues Ser-300–His-305. A helical membrane pass occupies residues Phe-306 to Phe-325. Over Ser-326–Leu-327 the chain is Cytoplasmic.

It belongs to the G-protein coupled receptor 1 family. As to expression, pituitary gland.

The protein localises to the cell membrane. Its function is as follows. Receptor for gonadotropin releasing hormone (GnRH) that mediates the action of GnRH to stimulate the secretion of the gonadotropic hormones luteinizing hormone (LH) and follicle-stimulating hormone (FSH). This receptor mediates its action by association with G-proteins that activate a phosphatidylinositol-calcium second messenger system. This Mus musculus (Mouse) protein is Gonadotropin-releasing hormone receptor (Gnrhr).